The primary structure comprises 109 residues: Large ribosomal subunit protein eL30 (109 aa).

It belongs to the eukaryotic ribosomal protein eL30 family. In terms of assembly, component of the large ribosomal subunit (LSU). Mature N.crassa ribosomes consist of a small (40S) and a large (60S) subunit. The 40S small subunit contains 1 molecule of ribosomal RNA (18S rRNA) and at least 32 different proteins. The large 60S subunit contains 3 rRNA molecules (26S, 5.8S and 5S rRNA) and at least 42 different proteins.

Its subcellular location is the cytoplasm. In terms of biological role, component of the ribosome, a large ribonucleoprotein complex responsible for the synthesis of proteins in the cell. The small ribosomal subunit (SSU) binds messenger RNAs (mRNAs) and translates the encoded message by selecting cognate aminoacyl-transfer RNA (tRNA) molecules. The large subunit (LSU) contains the ribosomal catalytic site termed the peptidyl transferase center (PTC), which catalyzes the formation of peptide bonds, thereby polymerizing the amino acids delivered by tRNAs into a polypeptide chain. The nascent polypeptides leave the ribosome through a tunnel in the LSU and interact with protein factors that function in enzymatic processing, targeting, and the membrane insertion of nascent chains at the exit of the ribosomal tunnel. The sequence is that of Large ribosomal subunit protein eL30 (rpl-30) from Neurospora crassa (strain ATCC 24698 / 74-OR23-1A / CBS 708.71 / DSM 1257 / FGSC 987).